A 395-amino-acid chain; its full sequence is S-adenosylmethionine synthase (395 aa).

An ATP-binding site is contributed by His16. A Mg(2+)-binding site is contributed by Asp18. K(+) is bound at residue Glu44. Positions 57 and 100 each coordinate L-methionine. The tract at residues 100–110 (QSPDIAQGVDR) is flexible loop. Residues 167-169 (DAK), 233-234 (RF), Asp242, 248-249 (RK), Ala265, and Lys269 contribute to the ATP site. Asp242 is an L-methionine binding site. Residue Lys273 coordinates L-methionine.

Belongs to the AdoMet synthase family. Homotetramer; dimer of dimers. Requires Mg(2+) as cofactor. K(+) is required as a cofactor.

It localises to the cytoplasm. It carries out the reaction L-methionine + ATP + H2O = S-adenosyl-L-methionine + phosphate + diphosphate. Its pathway is amino-acid biosynthesis; S-adenosyl-L-methionine biosynthesis; S-adenosyl-L-methionine from L-methionine: step 1/1. Its function is as follows. Catalyzes the formation of S-adenosylmethionine (AdoMet) from methionine and ATP. The overall synthetic reaction is composed of two sequential steps, AdoMet formation and the subsequent tripolyphosphate hydrolysis which occurs prior to release of AdoMet from the enzyme. This is S-adenosylmethionine synthase from Burkholderia cenocepacia (strain ATCC BAA-245 / DSM 16553 / LMG 16656 / NCTC 13227 / J2315 / CF5610) (Burkholderia cepacia (strain J2315)).